A 467-amino-acid polypeptide reads, in one-letter code: Asparagine--tRNA ligase (467 aa).

This sequence belongs to the class-II aminoacyl-tRNA synthetase family. In terms of assembly, homodimer.

The protein resides in the cytoplasm. It carries out the reaction tRNA(Asn) + L-asparagine + ATP = L-asparaginyl-tRNA(Asn) + AMP + diphosphate + H(+). The chain is Asparagine--tRNA ligase from Legionella pneumophila (strain Paris).